Reading from the N-terminus, the 493-residue chain is Cytochrome P450 2E1 (493 aa).

Position 298 to 303 (298 to 303 (FAGTET)) interacts with substrate. Heme is bound at residue Cys437.

Belongs to the cytochrome P450 family. Interacts with chaperones HSP70 and HSP90; this interaction is required for initial targeting to mitochondria. Heme serves as cofactor.

Its subcellular location is the endoplasmic reticulum membrane. The protein resides in the microsome membrane. The protein localises to the mitochondrion inner membrane. The catalysed reaction is an organic molecule + reduced [NADPH--hemoprotein reductase] + O2 = an alcohol + oxidized [NADPH--hemoprotein reductase] + H2O + H(+). It carries out the reaction (5Z,8Z,11Z)-eicosatrienoate + reduced [NADPH--hemoprotein reductase] + O2 = 19-hydroxy-(5Z,8Z,11Z)-eicosatrienoate + oxidized [NADPH--hemoprotein reductase] + H2O + H(+). The enzyme catalyses (5Z,8Z,11Z,14Z,17Z)-eicosapentaenoate + reduced [NADPH--hemoprotein reductase] + O2 = 19-hydroxy-(5Z,8Z,11Z,14Z,17Z)-eicosapentaenoate + oxidized [NADPH--hemoprotein reductase] + H2O + H(+). It catalyses the reaction (4Z,7Z,10Z,13Z,16Z,19Z)-docosahexaenoate + reduced [NADPH--hemoprotein reductase] + O2 = 21-hydroxy-(4Z,7Z,10Z,13Z,16Z,19Z)-docosahexaenoate + oxidized [NADPH--hemoprotein reductase] + H2O + H(+). The catalysed reaction is dodecanoate + reduced [NADPH--hemoprotein reductase] + O2 = 11-hydroxydodecanoate + oxidized [NADPH--hemoprotein reductase] + H2O + H(+). It carries out the reaction tetradecanoate + reduced [NADPH--hemoprotein reductase] + O2 = 13-hydroxytetradecanoate + oxidized [NADPH--hemoprotein reductase] + H2O + H(+). The enzyme catalyses 4-nitrophenol + NADPH + O2 + H(+) = 4-nitrocatechol + NADP(+) + H2O. Its pathway is lipid metabolism; fatty acid metabolism. The omega-1 hydroxylase activity is stimulated by cytochrome b5. A cytochrome P450 monooxygenase involved in the metabolism of fatty acids. Mechanistically, uses molecular oxygen inserting one oxygen atom into a substrate, and reducing the second into a water molecule, with two electrons provided by NADPH via cytochrome P450 reductase (NADPH--hemoprotein reductase). Catalyzes the hydroxylation of carbon-hydrogen bonds. Hydroxylates fatty acids specifically at the omega-1 position displaying the highest catalytic activity for saturated fatty acids. May be involved in the oxidative metabolism of xenobiotics. This chain is Cytochrome P450 2E1 (CYP2E1), found in Oryctolagus cuniculus (Rabbit).